Reading from the N-terminus, the 312-residue chain is Non-structural protein 12A (312 aa).

The segment covering 1–23 (MFKSGSGSLKRSGSISSVKSFSG) has biased composition (low complexity). 3 disordered regions span residues 1–37 (MFKS…RGSV), 62–97 (FVPE…YNQN), and 112–159 (SSKG…SHGT). Residues 63-73 (VPEKTKSEGNL) show a composition bias toward basic and acidic residues. Over residues 74 to 97 (KNKSSVITGNFGSSGPTNAHYNQN) the composition is skewed to polar residues. The segment covering 122–134 (DARHTATDSRLSQ) has biased composition (basic and acidic residues). Residues 135-154 (EVKQPFSEENASGNDLNTGR) are compositionally biased toward polar residues.

The protein belongs to the phytoreovirus non-structural protein Pns12A family.

It is found in the host cytoplasm. Constituent of viral factories. The chain is Non-structural protein 12A from Rice dwarf virus (isolate O) (RDV).